Here is a 556-residue protein sequence, read N- to C-terminus: Undecaprenyl phosphate-alpha-4-amino-4-deoxy-L-arabinose arabinosyl transferase (556 aa).

Transmembrane regions (helical) follow at residues 5–25 (MIKL…LLPL), 88–108 (FASV…ALLL), 116–136 (LLAA…TYSV), 179–199 (FMTK…PVAL), 207–227 (LLLF…PWAL), 258–278 (APFW…LALL), 296–316 (FLLL…KGKL), 319–339 (YILP…SGLA), 355–375 (LAFG…IIMP), 384–404 (LTIV…AVSL), and 410–430 (WGYL…GSIP).

Belongs to the glycosyltransferase 83 family.

The protein resides in the cell inner membrane. The enzyme catalyses 4-amino-4-deoxy-alpha-L-arabinopyranosyl di-trans,octa-cis-undecaprenyl phosphate + lipid IVA = lipid IIA + di-trans,octa-cis-undecaprenyl phosphate.. Its pathway is lipopolysaccharide metabolism; 4-amino-4-deoxy-beta-L-arabinose-lipid A biosynthesis. Its function is as follows. Catalyzes the transfer of the L-Ara4N moiety of the glycolipid undecaprenyl phosphate-alpha-L-Ara4N to lipid A. The modified arabinose is attached to lipid A and is required for resistance to polymyxin and cationic antimicrobial peptides. This is Undecaprenyl phosphate-alpha-4-amino-4-deoxy-L-arabinose arabinosyl transferase from Pectobacterium carotovorum subsp. carotovorum (strain PC1).